Consider the following 241-residue polypeptide: Glucosamine-6-phosphate deaminase (241 aa).

The active-site Proton acceptor; for enolization step is the D67. Residue N136 is the For ring-opening step of the active site. H138 (proton acceptor; for ring-opening step) is an active-site residue. The active-site For ring-opening step is the E143.

Belongs to the glucosamine/galactosamine-6-phosphate isomerase family. NagB subfamily.

It catalyses the reaction alpha-D-glucosamine 6-phosphate + H2O = beta-D-fructose 6-phosphate + NH4(+). The protein operates within amino-sugar metabolism; N-acetylneuraminate degradation; D-fructose 6-phosphate from N-acetylneuraminate: step 5/5. Catalyzes the reversible isomerization-deamination of glucosamine 6-phosphate (GlcN6P) to form fructose 6-phosphate (Fru6P) and ammonium ion. The polypeptide is Glucosamine-6-phosphate deaminase (Bacillus pumilus (strain SAFR-032)).